We begin with the raw amino-acid sequence, 376 residues long: Growth/differentiation factor 8 (376 aa).

Positions 1–24 are cleaved as a signal peptide; sequence MMQKLQMYVYIYLFMLIAAGPVDL. Residues 25–267 constitute a propeptide that is removed on maturation; the sequence is NEGSEREENV…VTDTPKRSRR (243 aa). Asparagine 72 is a glycosylation site (N-linked (GlcNAc...) asparagine). Disulfide bonds link cysteine 273–cysteine 283, cysteine 282–cysteine 341, cysteine 310–cysteine 373, and cysteine 314–cysteine 375.

The protein belongs to the TGF-beta family. Homodimer; disulfide-linked. Interacts with WFIKKN2, leading to inhibit its activity. Interacts with FSTL3. In terms of processing, synthesized as large precursor molecule that undergoes proteolytic cleavage to generate an N-terminal propeptide and a disulfide linked C-terminal dimer, which is the biologically active molecule. The circulating form consists of a latent complex of the C-terminal dimer and other proteins, including its propeptide, which maintain the C-terminal dimer in a latent, inactive state. Ligand activation requires additional cleavage of the prodomain by a tolloid-like metalloproteinase. As to expression, expressed specifically in developing and adult skeletal muscle. Weak expression in adipose tissue.

The protein resides in the secreted. Acts specifically as a negative regulator of skeletal muscle growth. The sequence is that of Growth/differentiation factor 8 (Mstn) from Mus musculus (Mouse).